Here is a 223-residue protein sequence, read N- to C-terminus: Ras-related protein Rab-37 (223 aa).

A disordered region spans residues methionine 1–serine 23. Threonine 2 bears the N-acetylthreonine mark. Threonine 38, glycine 39, valine 40, glycine 41, lysine 42, threonine 43, cysteine 44, and threonine 62 together coordinate GTP. Residue threonine 43 participates in Mg(2+) binding. 2 short sequence motifs (switch) span residues glycine 52–phenylalanine 67 and aspartate 85–aspartate 102. The Mg(2+) site is built by threonine 62 and aspartate 85. The GTP site is built by glycine 88, asparagine 143, lysine 144, aspartate 146, methionine 147, serine 173, alanine 174, and lysine 175. Residues cysteine 219 and cysteine 220 are each lipidated (S-geranylgeranyl cysteine). Cysteine 220 carries the cysteine methyl ester modification. Positions serine 221 to methionine 223 are cleaved as a propeptide — removed in mature form.

The protein belongs to the small GTPase superfamily. Rab family. In terms of assembly, interacts with RIMS1. Interacts (in GDP-bound form) with RPGR, RPGR functions as guanine exchange factor (GEF). The cofactor is Mg(2+).

Its subcellular location is the cytoplasmic vesicle. The protein localises to the cell projection. It is found in the cilium. The catalysed reaction is GTP + H2O = GDP + phosphate + H(+). Its activity is regulated as follows. Regulated by guanine nucleotide exchange factors (GEFs) including RPGR which promote the exchange of bound GDP for free GTP. Regulated by GTPase activating proteins (GAPs) which increase the GTP hydrolysis activity. Inhibited by GDP dissociation inhibitors (GDIs). In terms of biological role, the small GTPases Rab are key regulators of intracellular membrane trafficking, from the formation of transport vesicles to their fusion with membranes. Rabs cycle between an inactive GDP-bound form and an active GTP-bound form that is able to recruit to membranes different sets of downstream effectors directly responsible for vesicle formation, movement, tethering and fusion. Acts as an organizer for autophagosome biogenesis in a GTP-dependent manner. Involved in retinal homeostasis by autophagy regulation. The sequence is that of Ras-related protein Rab-37 from Homo sapiens (Human).